The primary structure comprises 399 residues: Transcription termination factor 1, mitochondrial (399 aa).

Residues 1-57 (MQSLSLGQTSISKGLNYLTIMAPGNLWHMRNNFLFGSRCWMTRFSAENIFKSVSFRL) constitute a mitochondrion transit peptide. Interaction with DNA regions lie at residues 169 to 170 (RS), 247 to 251 (QSTKR), 324 to 331 (AEKKFNDK), 355 to 358 (SIST), and 384 to 391 (SKKRYEAK).

It belongs to the mTERF family. As to quaternary structure, monomer. In terms of processing, phosphoprotein with mostly four phosphate groups. While the DNA-binding activity is unaffected by the phosphorylation state, only the phosphorylated form of the protein is active for termination activity. Functioning seems to be regulated by phosphorylation.

The protein localises to the mitochondrion. Transcription termination factor. Binds to a 28 bp region within the tRNA(Leu(uur)) gene at a position immediately adjacent to and downstream of the 16S rRNA gene; this region comprises a tridecamer sequence critical for directing accurate termination. Binds DNA along the major grove and promotes DNA bending and partial unwinding. Promotes base flipping. Transcription termination activity appears to be polarized with highest specificity for transcripts initiated on the light strand. The protein is Transcription termination factor 1, mitochondrial (MTERF1) of Homo sapiens (Human).